The chain runs to 214 residues: LexA repressor (214 aa).

The segment at residues 28-48 is a DNA-binding region (H-T-H motif); the sequence is IRDIQRELSISSTSVVAYNLR. Residues Ser-133 and Lys-172 each act as for autocatalytic cleavage activity in the active site.

This sequence belongs to the peptidase S24 family. Homodimer.

It carries out the reaction Hydrolysis of Ala-|-Gly bond in repressor LexA.. Functionally, represses a number of genes involved in the response to DNA damage (SOS response), including recA and lexA. In the presence of single-stranded DNA, RecA interacts with LexA causing an autocatalytic cleavage which disrupts the DNA-binding part of LexA, leading to derepression of the SOS regulon and eventually DNA repair. This chain is LexA repressor, found in Herpetosiphon aurantiacus (strain ATCC 23779 / DSM 785 / 114-95).